The primary structure comprises 214 residues: Adenylate kinase (214 aa).

10-15 is an ATP binding site; it reads GAGKGT. The segment at 30-59 is NMP; the sequence is STGDMFRAAIKEGTELGKQAKALMDEGKLV. AMP is bound by residues T31, R36, 57 to 59, 85 to 88, and Q92; these read KLV and GFPR. Residues 122 to 159 form an LID region; sequence GRRVHQPSGRTYHVVYNPPKVEGKDDVTGEDLIIRQDD. Residues R123 and 132–133 each bind ATP; that span reads TY. AMP is bound by residues R156 and R167. K200 is a binding site for ATP.

Belongs to the adenylate kinase family. In terms of assembly, monomer.

The protein resides in the cytoplasm. It carries out the reaction AMP + ATP = 2 ADP. Its pathway is purine metabolism; AMP biosynthesis via salvage pathway; AMP from ADP: step 1/1. Functionally, catalyzes the reversible transfer of the terminal phosphate group between ATP and AMP. Plays an important role in cellular energy homeostasis and in adenine nucleotide metabolism. This is Adenylate kinase from Actinobacillus pleuropneumoniae serotype 5b (strain L20).